The primary structure comprises 102 residues: Large ribosomal subunit protein bL21 (102 aa).

It belongs to the bacterial ribosomal protein bL21 family. Part of the 50S ribosomal subunit. Contacts protein L20.

Its function is as follows. This protein binds to 23S rRNA in the presence of protein L20. The chain is Large ribosomal subunit protein bL21 from Zymomonas mobilis subsp. mobilis (strain ATCC 31821 / ZM4 / CP4).